We begin with the raw amino-acid sequence, 269 residues long: 3'(2'),5'-bisphosphate nucleotidase CysQ (269 aa).

Mg(2+) contacts are provided by Glu-69, Asp-89, Leu-91, Asp-92, and Asp-216. Glu-69 is a binding site for substrate. Residues 91–94 (LDGT) and Asp-216 contribute to the substrate site.

This sequence belongs to the inositol monophosphatase superfamily. CysQ family. The cofactor is Mg(2+).

The protein localises to the cell inner membrane. It catalyses the reaction adenosine 3',5'-bisphosphate + H2O = AMP + phosphate. Functionally, converts adenosine-3',5'-bisphosphate (PAP) to AMP. The polypeptide is 3'(2'),5'-bisphosphate nucleotidase CysQ (Aggregatibacter actinomycetemcomitans (Actinobacillus actinomycetemcomitans)).